Reading from the N-terminus, the 426-residue chain is Gamma-glutamyl phosphate reductase (426 aa).

It belongs to the gamma-glutamyl phosphate reductase family.

Its subcellular location is the cytoplasm. The catalysed reaction is L-glutamate 5-semialdehyde + phosphate + NADP(+) = L-glutamyl 5-phosphate + NADPH + H(+). It functions in the pathway amino-acid biosynthesis; L-proline biosynthesis; L-glutamate 5-semialdehyde from L-glutamate: step 2/2. Functionally, catalyzes the NADPH-dependent reduction of L-glutamate 5-phosphate into L-glutamate 5-semialdehyde and phosphate. The product spontaneously undergoes cyclization to form 1-pyrroline-5-carboxylate. The polypeptide is Gamma-glutamyl phosphate reductase (Cupriavidus taiwanensis (strain DSM 17343 / BCRC 17206 / CCUG 44338 / CIP 107171 / LMG 19424 / R1) (Ralstonia taiwanensis (strain LMG 19424))).